Consider the following 157-residue polypeptide: Thioredoxin 2 (157 aa).

An N-terminal signal peptide occupies residues 1–22 (MKHILALVVFIISFFCFKDVNC). The Thioredoxin domain maps to 46 to 157 (LRMYNKMPRL…ELTSTIRKHL (112 aa)). Residues C82 and C85 each act as nucleophile in the active site. C82 and C85 are disulfide-bonded.

This sequence belongs to the thioredoxin family. Monomer. Component of the translocon PTEX complex composed of HSP101, EXP2, PTEX150, PTEX88 and TRX2. The disulfide bond between Cys-82 and Cys-85 acts as a redox-active center and is reduced by thioredoxin reductase TRXR.

Functionally, participates in various redox reactions through the reversible oxidation of its active center dithiol to a disulfide and catalyzes dithiol-disulfide exchange reactions. As part of the translocon PTEX complex, plays a role in the export of parasite proteins into the host erythrocyte. The translocon PTEX complex is a multi-protein machinery resident in the parasite parasitophorous vacuolar membrane, responsible for protein secretion into host cells. May contribute to the unfolding of proteins containing the PEXEL localization motif before their passage through the translocon or regulate the PTEX complex function. The protein is Thioredoxin 2 of Plasmodium berghei (strain Anka).